The following is a 312-amino-acid chain: Homoserine O-acetyltransferase (312 aa).

Residue C142 is the Acyl-thioester intermediate of the active site. 2 residues coordinate substrate: K163 and S192. H235 (proton acceptor) is an active-site residue. E237 is an active-site residue. Substrate is bound at residue R249.

Belongs to the MetA family.

The protein localises to the cytoplasm. It carries out the reaction L-homoserine + acetyl-CoA = O-acetyl-L-homoserine + CoA. Its pathway is amino-acid biosynthesis; L-methionine biosynthesis via de novo pathway; O-acetyl-L-homoserine from L-homoserine: step 1/1. Transfers an acetyl group from acetyl-CoA to L-homoserine, forming acetyl-L-homoserine. The chain is Homoserine O-acetyltransferase from Ruegeria sp. (strain TM1040) (Silicibacter sp.).